The chain runs to 449 residues: Galactosyl transferase CpsE (449 aa).

The next 5 membrane-spanning stretches (helical) occupy residues 5–22, 27–46, 59–78, 88–107, and 258–280; these read VVVY…TPNF, DLLF…DFYR, MVLK…FFIF, SFFT…NSFL, and FLDI…FLVP.

This sequence belongs to the bacterial sugar transferase family.

It localises to the cell membrane. Its function is as follows. Galactosyl transferase is essential for the assembly of the group B streptococci (GBS) type III capsular polysaccharide. May be involved in the formation of either or both galactosidic bonds by catalyzing the addition of galactose to an oligosaccharide precursor or to a lipid intermediate. Type III capsular polysaccharide consists of a linear backbone with short side chains ending in residues of N-acetylneuraminic acid or sialic acid. The presence of sialic acid on the surface of the organism inhibits activation of the alternative pathway of complement and is thought to be an important element in the virulence function of the capsule. The sequence is that of Galactosyl transferase CpsE (cpsE) from Streptococcus agalactiae serotype III (strain NEM316).